The primary structure comprises 336 residues: MYYPFVRKALFQLDPERAHELTFQQLRRITGTPLEALVRQKVQEKPVQCMGLTFKNPLGLAAGLDKNGECIDALGAMGFGSIEVGTVTPRPQAGNDKPRLFRLVEAEGLINRMGFNNHGVDHLIENVKKAHFDGVLGINIGKNKDTPVEQGKDDYLICMEKVYAYAGYIAVNISSPNTPGLRTLQYGEALDDLLSAIKNKQNELQEIHHKYVPVAVKIAPDLSVEELIQVADSLVRHNIDGVIATNTTLDRSLVNGMKHCDEMGGLSGRPVQLKSTEIIRALSAELKGRLPIIGVGGIDSVIAAREKMAAGATLVQIYSGFIFKGPQLIKEIVNHI.

Residues 62–66 and T86 contribute to the FMN site; that span reads AGLDK. K66 provides a ligand contact to substrate. A substrate-binding site is contributed by 111-115; it reads NRMGF. FMN is bound by residues N139 and N172. N172 provides a ligand contact to substrate. The active-site Nucleophile is S175. N177 is a binding site for substrate. Residues K217 and T245 each contribute to the FMN site. 246–247 lines the substrate pocket; the sequence is NT. FMN is bound by residues G268, G297, and 318–319; that span reads YS.

This sequence belongs to the dihydroorotate dehydrogenase family. Type 2 subfamily. Monomer. It depends on FMN as a cofactor.

The protein localises to the cell membrane. It catalyses the reaction (S)-dihydroorotate + a quinone = orotate + a quinol. Its pathway is pyrimidine metabolism; UMP biosynthesis via de novo pathway; orotate from (S)-dihydroorotate (quinone route): step 1/1. Functionally, catalyzes the conversion of dihydroorotate to orotate with quinone as electron acceptor. This is Dihydroorotate dehydrogenase (quinone) from Enterobacter sp. (strain 638).